A 165-amino-acid chain; its full sequence is Urease accessory protein UreE (165 aa).

It belongs to the UreE family.

It is found in the cytoplasm. Functionally, involved in urease metallocenter assembly. Binds nickel. Probably functions as a nickel donor during metallocenter assembly. The protein is Urease accessory protein UreE of Flavobacterium johnsoniae (strain ATCC 17061 / DSM 2064 / JCM 8514 / BCRC 14874 / CCUG 350202 / NBRC 14942 / NCIMB 11054 / UW101) (Cytophaga johnsonae).